The chain runs to 470 residues: Cysteine--tRNA ligase 1 (470 aa).

Cysteine 29 is a binding site for Zn(2+). Positions 31–41 (PTVYDDAHIGN) match the 'HIGH' region motif. Zn(2+)-binding residues include cysteine 221, histidine 246, and glutamate 250. Positions 279–283 (KMSKS) match the 'KMSKS' region motif. Lysine 282 contacts ATP.

The protein belongs to the class-I aminoacyl-tRNA synthetase family. Monomer. Requires Zn(2+) as cofactor.

It localises to the cytoplasm. It carries out the reaction tRNA(Cys) + L-cysteine + ATP = L-cysteinyl-tRNA(Cys) + AMP + diphosphate. The sequence is that of Cysteine--tRNA ligase 1 from Burkholderia lata (strain ATCC 17760 / DSM 23089 / LMG 22485 / NCIMB 9086 / R18194 / 383).